Here is a 309-residue protein sequence, read N- to C-terminus: Acetolactate synthase small subunit, mitochondrial (309 aa).

Residues methionine 1 to cysteine 24 constitute a mitochondrion transit peptide. One can recognise an ACT domain in the interval valine 79–arginine 159.

It belongs to the acetolactate synthase small subunit family. In terms of assembly, the acetolactate synthase complex contains the catalytic regulatory subunit ILV2 and the regulatory small subunit ILV6.

It is found in the mitochondrion. It participates in amino-acid biosynthesis; L-isoleucine biosynthesis; L-isoleucine from 2-oxobutanoate: step 1/4. Its pathway is amino-acid biosynthesis; L-valine biosynthesis; L-valine from pyruvate: step 1/4. Its function is as follows. Regulatory subunit of mitochondrial acetolactate synthase, which catalyzes the first of a series of common steps in the biosynthesis of the branched-chain amino acids. Stimulates activity of the acetolactate synthase catalytic subunit ILV2 seven- to tenfold and confers sensitivity to inhibition by valine and activation by ATP. The sequence is that of Acetolactate synthase small subunit, mitochondrial (ILV6) from Saccharomyces cerevisiae (strain ATCC 204508 / S288c) (Baker's yeast).